We begin with the raw amino-acid sequence, 332 residues long: MNLVNNFSKLFPRCLTTGLYLWSLYAIVVCIHVIRARVVLPLVFTIAMVALYTYAKLIYVGPGTTKEYSILRVYDLNAAESGFELPPEMLVKRSYTQKRNGRFRVCKSCSSWKPDRCHHCSTCNVCVLKMDHHCPWFAGCVGYRNQKFFIQFLIYCTVYSILVLILSSMEIYTWFKGEFFEVELINFTLLSLWLLALVVSISITIFTVFSISQVCQNQTTIELYSLRRYNEEVAFLNEFSNEPIKGTINIFDLGKKLINWEEVMGYSLIEWALPISRRPSSLDLEGSHSHGLFFNVNKNVSKTMNESVDLQDRLLRRLTPRSSLDVDRSNFV.

The Cytoplasmic segment spans residues 1–13 (MNLVNNFSKLFPR). A helical membrane pass occupies residues 14-34 (CLTTGLYLWSLYAIVVCIHVI). At 35–37 (RAR) the chain is on the lumenal side. Residues 38-58 (VVLPLVFTIAMVALYTYAKLI) traverse the membrane as a helical segment. Topologically, residues 59–147 (YVGPGTTKEY…AGCVGYRNQK (89 aa)) are cytoplasmic. Residues 104–154 (RVCKSCSSWKPDRCHHCSTCNVCVLKMDHHCPWFAGCVGYRNQKFFIQFLI) form the DHHC domain. A helical membrane pass occupies residues 148 to 168 (FFIQFLIYCTVYSILVLILSS). The Lumenal segment spans residues 169–188 (MEIYTWFKGEFFEVELINFT). Residues 189 to 209 (LLSLWLLALVVSISITIFTVF) form a helical membrane-spanning segment. The Cytoplasmic segment spans residues 210 to 332 (SISQVCQNQT…SLDVDRSNFV (123 aa)).

The protein belongs to the DHHC palmitoyltransferase family. PFA3 subfamily. Post-translationally, autopalmitoylated.

The protein localises to the vacuole membrane. It catalyses the reaction L-cysteinyl-[protein] + hexadecanoyl-CoA = S-hexadecanoyl-L-cysteinyl-[protein] + CoA. Palmitoyltransferase specific for VAC8. Palmitoylates VAC8 at one or more of its N-terminal cysteine residues, which is required for its proper membrane localization. The sequence is that of Palmitoyltransferase PFA3 (PFA3) from Candida glabrata (strain ATCC 2001 / BCRC 20586 / JCM 3761 / NBRC 0622 / NRRL Y-65 / CBS 138) (Yeast).